Consider the following 651-residue polypeptide: Beta-glucuronidase (651 aa).

Positions 1 to 22 (MLRGPAAVWAALGPLLWACGLA) are cleaved as a signal peptide. Residues N172 and N419 are each glycosylated (N-linked (GlcNAc...) asparagine). Residue E450 is the Proton donor of the active site. N630 carries an N-linked (GlcNAc...) asparagine glycan.

The protein belongs to the glycosyl hydrolase 2 family. Homotetramer.

Its subcellular location is the lysosome. The catalysed reaction is a beta-D-glucuronoside + H2O = D-glucuronate + an alcohol. With respect to regulation, inhibited by L-aspartic acid. Functionally, plays an important role in the degradation of dermatan and keratan sulfates. The chain is Beta-glucuronidase (GUSB) from Felis catus (Cat).